Here is a 155-residue protein sequence, read N- to C-terminus: Small ribosomal subunit protein uS7 (155 aa).

Belongs to the universal ribosomal protein uS7 family. Part of the 30S ribosomal subunit. Contacts proteins S9 and S11.

Its function is as follows. One of the primary rRNA binding proteins, it binds directly to 16S rRNA where it nucleates assembly of the head domain of the 30S subunit. Is located at the subunit interface close to the decoding center, probably blocks exit of the E-site tRNA. This is Small ribosomal subunit protein uS7 from Xanthomonas campestris pv. campestris (strain 8004).